A 456-amino-acid chain; its full sequence is MTKLTCFKAYDIRGRLGEELNEDIAWRIGRAYGEYLKPKTVVLGGDVRLTSEALKLALAKGLQDAGVDVLDIGMSGTEEIYFATFHLGVDGGIEVTASHNPMDYNGMKLVREGARPISGDTGLRDVQRLAEAGDFPPVNEAARGSYRQISLRDAYIDHLLGYISVNNLTPLKLVFNAGNGAAGPVIDAIEARLKALGAPVEFIKIHNTPDGTFPNGIPNPLLPECRDDTRKAVIEHGADMGIAFDGDFDRCFLFDEKGQFIEGYYIVGLLAEAFLEKHPGAKIIHDPRLTWNTEAVVTAAGGTPVMSKTGHAFIKERMRTEDAIYGGEMSAHHYFRDFAYCDSGMIPWLLVAELVCLKRQSLGELVRDRMAAFPASGEINSRLAEPAAAIARVEAHFAEEAQAVDRTDGLSMSFADWRFNLRSSNTEPVVRLNVESRGDIPLMEARTRTLLALLNQ.

The active-site Phosphoserine intermediate is the Ser98. Mg(2+) is bound by residues Ser98, Asp245, Asp247, and Asp249.

The protein belongs to the phosphohexose mutase family. Requires Mg(2+) as cofactor.

It carries out the reaction alpha-D-mannose 1-phosphate = D-mannose 6-phosphate. It participates in nucleotide-sugar biosynthesis; GDP-alpha-D-mannose biosynthesis; alpha-D-mannose 1-phosphate from D-fructose 6-phosphate: step 2/2. Functionally, involved in the biosynthesis of the capsular polysaccharide colanic acid. In Salmonella typhimurium (strain LT2 / SGSC1412 / ATCC 700720), this protein is Phosphomannomutase (manB).